Reading from the N-terminus, the 118-residue chain is Small ribosomal subunit protein uS13 (118 aa).

The tract at residues 94–118 (GLPVRGQRTKTNARTRKGPRKPIRK) is disordered.

It belongs to the universal ribosomal protein uS13 family. Part of the 30S ribosomal subunit. Forms a loose heterodimer with protein S19. Forms two bridges to the 50S subunit in the 70S ribosome.

Its function is as follows. Located at the top of the head of the 30S subunit, it contacts several helices of the 16S rRNA. In the 70S ribosome it contacts the 23S rRNA (bridge B1a) and protein L5 of the 50S subunit (bridge B1b), connecting the 2 subunits; these bridges are implicated in subunit movement. Contacts the tRNAs in the A and P-sites. In Marinobacter nauticus (strain ATCC 700491 / DSM 11845 / VT8) (Marinobacter aquaeolei), this protein is Small ribosomal subunit protein uS13.